Consider the following 521-residue polypeptide: Colicin-E1* (521 aa).

Disordered stretches follow at residues 26 to 52 and 127 to 163; these read NGNPDGSGSGGGGGTGGSKSESSAAIH and SGCALQKQKKKPVKKRKRAEKSFQEAEQRRKEIEKEQ. Over residues 30 to 42 the composition is skewed to gly residues; sequence DGSGSGGGGGTGG. Basic residues predominate over residues 133 to 145; that stretch reads KQKKKPVKKRKRA. The span at 146–163 shows a compositional bias: basic and acidic residues; that stretch reads EKSFQEAEQRRKEIEKEQ. Transmembrane regions (helical) follow at residues 470–486 and 493–509; these read AVDAGVSYVVVLLFSVL and IWGIAIVTGILCAFIDK.

The protein belongs to the channel forming colicin family.

It localises to the cell membrane. In terms of biological role, this colicin is a channel-forming colicin. This class of transmembrane toxins depolarize the cytoplasmic membrane, leading to dissipation of cellular energy. Colicins are polypeptide toxins produced by and active against E.coli and closely related bacteria. This Shigella sonnei protein is Colicin-E1* (cea).